The primary structure comprises 507 residues: Ribosomal protein uS12 methylthiotransferase RimO (507 aa).

The region spanning 13 to 124 (RRVALLTLGC…ISDRLGAVLA (112 aa)) is the MTTase N-terminal domain. 3 residues coordinate [4Fe-4S] cluster: cysteine 22, cysteine 58, and cysteine 87. The interval 150-175 (AAVSLPGHGTRAAAAGPGGRSAPVEV) is disordered. A compositionally biased stretch (low complexity) spans 155–172 (PGHGTRAAAAGPGGRSAP). In terms of domain architecture, Radical SAM core spans 191–422 (LDTGPVASLK…ALADELCAQR (232 aa)). Residues cysteine 205, cysteine 209, and cysteine 212 each coordinate [4Fe-4S] cluster. Residues 424-497 (EQRLGSTVQV…GVDLVAVPDG (74 aa)) form the TRAM domain.

It belongs to the methylthiotransferase family. RimO subfamily. [4Fe-4S] cluster serves as cofactor.

Its subcellular location is the cytoplasm. It carries out the reaction L-aspartate(89)-[ribosomal protein uS12]-hydrogen + (sulfur carrier)-SH + AH2 + 2 S-adenosyl-L-methionine = 3-methylsulfanyl-L-aspartate(89)-[ribosomal protein uS12]-hydrogen + (sulfur carrier)-H + 5'-deoxyadenosine + L-methionine + A + S-adenosyl-L-homocysteine + 2 H(+). Catalyzes the methylthiolation of an aspartic acid residue of ribosomal protein uS12. This is Ribosomal protein uS12 methylthiotransferase RimO from Salinispora arenicola (strain CNS-205).